A 419-amino-acid chain; its full sequence is MQIYMVGGAVRDRLLGRPVNDRDWVVVGATPDDLAARGFLPVGRDFPVFLHPETREEYALARTERKSGRGYRGFVVDTAPDVTLEQDLSRRDLTINAMAVRGEDPAAWELVDPYGGARDLQAKLLRHVTDAFREDPVRILRVARFAARFTDFSVAPETMALMREMVDAGEAADLVPERVWQEIARGLMEAAPSRMFEVLRGCGALAVLLPELDRLWGVPQRAEYHPEVDTGVHVMMVLDMAARLHAPLAVRFASLVHDLGKGTTPADVLPRHIGHEQRSATLLADVCERLRVPVECRETADVVAREHGNIHRSAELGAAALVRLLERCDALRKPARFADVLLACECDARGRLGFEETPYPQRQRLLGALQAARSVDTAAVAARAQARGAAGPQVGEWIRRARGDAVQEWMAAQPPAAGT.

Residues G8 and R11 each contribute to the ATP site. 2 residues coordinate CTP: G8 and R11. Mg(2+) is bound by residues D21 and D23. Residues R91, R141, and R144 each coordinate ATP. Residues R91, R141, and R144 each contribute to the CTP site. In terms of domain architecture, HD spans 230-331 (TGVHVMMVLD…VRLLERCDAL (102 aa)).

This sequence belongs to the tRNA nucleotidyltransferase/poly(A) polymerase family. Bacterial CCA-adding enzyme type 1 subfamily. As to quaternary structure, monomer. Can also form homodimers and oligomers. Requires Mg(2+) as cofactor. Ni(2+) serves as cofactor.

The enzyme catalyses a tRNA precursor + 2 CTP + ATP = a tRNA with a 3' CCA end + 3 diphosphate. It catalyses the reaction a tRNA with a 3' CCA end + 2 CTP + ATP = a tRNA with a 3' CCACCA end + 3 diphosphate. Catalyzes the addition and repair of the essential 3'-terminal CCA sequence in tRNAs without using a nucleic acid template. Adds these three nucleotides in the order of C, C, and A to the tRNA nucleotide-73, using CTP and ATP as substrates and producing inorganic pyrophosphate. tRNA 3'-terminal CCA addition is required both for tRNA processing and repair. Also involved in tRNA surveillance by mediating tandem CCA addition to generate a CCACCA at the 3' terminus of unstable tRNAs. While stable tRNAs receive only 3'-terminal CCA, unstable tRNAs are marked with CCACCA and rapidly degraded. This Paracidovorax citrulli (strain AAC00-1) (Acidovorax citrulli) protein is Multifunctional CCA protein.